A 223-amino-acid polypeptide reads, in one-letter code: Phosphoribosylformylglycinamidine synthase subunit PurQ (223 aa).

A Glutamine amidotransferase type-1 domain is found at 2–223 (KTAIIQLPGL…FQSALELAKG (222 aa)). C86 (nucleophile) is an active-site residue. Residues H196 and E198 contribute to the active site.

As to quaternary structure, part of the FGAM synthase complex composed of 1 PurL, 1 PurQ and 2 PurS subunits.

Its subcellular location is the cytoplasm. It carries out the reaction N(2)-formyl-N(1)-(5-phospho-beta-D-ribosyl)glycinamide + L-glutamine + ATP + H2O = 2-formamido-N(1)-(5-O-phospho-beta-D-ribosyl)acetamidine + L-glutamate + ADP + phosphate + H(+). The enzyme catalyses L-glutamine + H2O = L-glutamate + NH4(+). The protein operates within purine metabolism; IMP biosynthesis via de novo pathway; 5-amino-1-(5-phospho-D-ribosyl)imidazole from N(2)-formyl-N(1)-(5-phospho-D-ribosyl)glycinamide: step 1/2. Functionally, part of the phosphoribosylformylglycinamidine synthase complex involved in the purines biosynthetic pathway. Catalyzes the ATP-dependent conversion of formylglycinamide ribonucleotide (FGAR) and glutamine to yield formylglycinamidine ribonucleotide (FGAM) and glutamate. The FGAM synthase complex is composed of three subunits. PurQ produces an ammonia molecule by converting glutamine to glutamate. PurL transfers the ammonia molecule to FGAR to form FGAM in an ATP-dependent manner. PurS interacts with PurQ and PurL and is thought to assist in the transfer of the ammonia molecule from PurQ to PurL. This chain is Phosphoribosylformylglycinamidine synthase subunit PurQ, found in Bartonella henselae (strain ATCC 49882 / DSM 28221 / CCUG 30454 / Houston 1) (Rochalimaea henselae).